The following is a 357-amino-acid chain: 3-dehydroquinate synthase (357 aa).

Residues 69–74 (DGEKNK), 103–107 (GVIGD), 127–128 (TT), lysine 140, and lysine 149 each bind NAD(+). Zn(2+) contacts are provided by glutamate 182, histidine 245, and histidine 262.

This sequence belongs to the sugar phosphate cyclases superfamily. Dehydroquinate synthase family. Requires Co(2+) as cofactor. Zn(2+) serves as cofactor. The cofactor is NAD(+).

Its subcellular location is the cytoplasm. It carries out the reaction 7-phospho-2-dehydro-3-deoxy-D-arabino-heptonate = 3-dehydroquinate + phosphate. Its pathway is metabolic intermediate biosynthesis; chorismate biosynthesis; chorismate from D-erythrose 4-phosphate and phosphoenolpyruvate: step 2/7. Catalyzes the conversion of 3-deoxy-D-arabino-heptulosonate 7-phosphate (DAHP) to dehydroquinate (DHQ). This is 3-dehydroquinate synthase from Shewanella denitrificans (strain OS217 / ATCC BAA-1090 / DSM 15013).